A 295-amino-acid polypeptide reads, in one-letter code: MAMQTVREGLFSAPQTSWWTAFGSQPLAPESLAGDSDSFAGVKVGSVGETGQRVDKQSNSATHLAFSLGDVKSPRLVPKPHGATFSMQSPCLELGFSQPPIYTKYPYGEQQYYGVVSAYGSQSRVMLPLNMETEDSTIYVNSKQYHGIIRRRQSRAKAAAVLDQKKLSSRCRKPYMHHSRHLHALRRPRGSGGRFLNTKSQNLENSGTNAKKGDGSMQIQSQPKPQQSNSQNSEVVHPENGTMNLSNGLNVSGSEVTSMNYFLSSPVHSLGGMVMPSKWIAAAAAMDNGCCNFKT.

The Subunit association domain (SAD) motif lies at 139–165 (YVNSKQYHGIIRRRQSRAKAAAVLDQK). The NFYA/HAP2-type DNA-binding region spans 173–198 (KPYMHHSRHLHALRRPRGSGGRFLNT). Positions 178-189 (HSRHLHALRRPR) are enriched in basic residues. Residues 178–244 (HSRHLHALRR…VVHPENGTMN (67 aa)) are disordered. The segment covering 197 to 209 (NTKSQNLENSGTN) has biased composition (polar residues). Low complexity predominate over residues 216 to 233 (SMQIQSQPKPQQSNSQNS).

Belongs to the NFYA/HAP2 subunit family. As to quaternary structure, heterotrimeric transcription factor composed of three components, NF-YA, NF-YB and NF-YC. NF-YB and NF-YC must interact and dimerize for NF-YA association and DNA binding. Component of a heat stress-inducible transcriptional complex with NF-YA and NF-YB subunits made, at least, of NFYA2, NFYB3 and DPB3-1 in cooperation with DREB2A. In terms of tissue distribution, ubiquitous. Expressed in seedlings, roots, petioles, hypocotyls, reproductive organ tissues and leaves.

It is found in the nucleus. Stimulates the transcription of various genes by recognizing and binding to a CCAAT motif in promoters. Promotes the expression of heat stress-inducible genes by contributing to the formation of a heat stress-specific transcriptional complex with NF-Y subunits (e.g. DPB3-1, NF-YA2 and NF-YB3) and DREB2A at the promoter of target genes, thus promoting heat tolerance. The protein is Nuclear transcription factor Y subunit A-2 of Arabidopsis thaliana (Mouse-ear cress).